A 152-amino-acid chain; its full sequence is uncharacterized protein (152 aa).

Residues 12–34 (ALLYLGGGLLAMIYGLITFFMAF) form a helical membrane-spanning segment.

This sequence to B.subtilis YfjD.

The protein localises to the membrane. This is an uncharacterized protein from Bacillus subtilis (strain 168).